A 400-amino-acid polypeptide reads, in one-letter code: Diphosphomevalonate decarboxylase (400 aa).

Alanine 2 bears the N-acetylalanine mark. (R)-5-diphosphomevalonate-binding positions include 23–26 and arginine 78; that span reads YWGK. Serine 96 is subject to Phosphoserine. (R)-5-diphosphomevalonate is bound by residues 156-161 and threonine 212; that span reads SGSACR.

It belongs to the diphosphomevalonate decarboxylase family. In terms of assembly, homodimer. In terms of tissue distribution, expressed in heart, skeletal muscle, lung, liver, brain, pancreas, kidney and placenta.

Its subcellular location is the cytoplasm. It catalyses the reaction (R)-5-diphosphomevalonate + ATP = isopentenyl diphosphate + ADP + phosphate + CO2. Its pathway is steroid biosynthesis; cholesterol biosynthesis. Catalyzes the ATP dependent decarboxylation of (R)-5-diphosphomevalonate to form isopentenyl diphosphate (IPP). Functions in the mevalonate (MVA) pathway leading to isopentenyl diphosphate (IPP), a key precursor for the biosynthesis of isoprenoids and sterol synthesis. In Homo sapiens (Human), this protein is Diphosphomevalonate decarboxylase (MVD).